The chain runs to 763 residues: Phosphoglycerol transferase I (763 aa).

4 consecutive transmembrane segments (helical) span residues 1–21, 26–46, 77–97, and 108–128; these read MSEL…AWKA, WWFA…ITLY, ILPG…LGWI, and VGYS…SPAF.

The protein belongs to the OpgB family.

The protein resides in the cell inner membrane. The enzyme catalyses a phosphatidylglycerol + a membrane-derived-oligosaccharide D-glucose = a 1,2-diacyl-sn-glycerol + a membrane-derived-oligosaccharide 6-(glycerophospho)-D-glucose.. The protein operates within glycan metabolism; osmoregulated periplasmic glucan (OPG) biosynthesis. In terms of biological role, transfers a phosphoglycerol residue from phosphatidylglycerol to the membrane-bound nascent glucan backbones. The polypeptide is Phosphoglycerol transferase I (Salmonella agona (strain SL483)).